Consider the following 52-residue polypeptide: Proteinase inhibitor (52 aa).

The residue at position 1 (Gln1) is a Pyrrolidone carboxylic acid. Cystine bridges form between Cys3–Cys40, Cys6–Cys24, Cys7–Cys36, and Cys13–Cys49.

The protein belongs to the protease inhibitor I20 (potato type II proteinase inhibitor) family.

The protein resides in the secreted. This Solanum melongena (Eggplant) protein is Proteinase inhibitor.